A 314-amino-acid chain; its full sequence is Ribonuclease Z (314 aa).

Residues H62, H64, D66, H67, H139, D210, and H268 each coordinate Zn(2+). D66 (proton acceptor) is an active-site residue.

This sequence belongs to the RNase Z family. As to quaternary structure, homodimer. Requires Zn(2+) as cofactor.

It catalyses the reaction Endonucleolytic cleavage of RNA, removing extra 3' nucleotides from tRNA precursor, generating 3' termini of tRNAs. A 3'-hydroxy group is left at the tRNA terminus and a 5'-phosphoryl group is left at the trailer molecule.. Its function is as follows. Zinc phosphodiesterase, which displays some tRNA 3'-processing endonuclease activity. Probably involved in tRNA maturation, by removing a 3'-trailer from precursor tRNA. This is Ribonuclease Z from Acaryochloris marina (strain MBIC 11017).